Consider the following 252-residue polypeptide: Hydroxyacylglutathione hydrolase (252 aa).

The Zn(2+) site is built by His54, His56, Asp58, His59, His111, Asp130, and His170.

Belongs to the metallo-beta-lactamase superfamily. Glyoxalase II family. As to quaternary structure, monomer. The cofactor is Zn(2+).

The enzyme catalyses an S-(2-hydroxyacyl)glutathione + H2O = a 2-hydroxy carboxylate + glutathione + H(+). It participates in secondary metabolite metabolism; methylglyoxal degradation; (R)-lactate from methylglyoxal: step 2/2. Functionally, thiolesterase that catalyzes the hydrolysis of S-D-lactoyl-glutathione to form glutathione and D-lactic acid. The polypeptide is Hydroxyacylglutathione hydrolase (Francisella tularensis subsp. tularensis (strain FSC 198)).